The sequence spans 522 residues: MTPNIHHDKILILDFGAQYTQLIARRIREIGVYCEVWPWDHSPEEILSFGAKGIILSGGPESTTSPGAPAAPQHVFDSDLPIFGICYGMQTMAVHLGGATEAADKREFGHASVQVIYPDTLFSGLSDHPSEFRLDVWMSHGDHVSRVPPCFTITAATDRIPIAAMSREDKRWYGVQFHPEVTHTLQGQALLRRFVVDICGCQTLWTSANIIEDQIARVRERVGCDEVILGLSGGVDSSVVAALLHKAIGSQLTCVFVDTGMLRWGEGDQVMAMFAEHMGVNVVRINAASRYFDALQGVYDPEAKRKIIGNLFIQIFEEEASKRKQAKWLAQGTIYPDVIESAGSKTGKAHVIKSHHNVGGLPEQMTLGMVEPLRELFKDEVRRLGVALGLPHAMVYRHPFPGPGLGVRILGEVKPEYAELLAKADSIFIDELHQADLYDKVSQAFAVFLPVKSVGVVGDARAYEWVIALRAVETVDFMTAHWAPLPYDFLSTVSNRIINELRGVSRVVYDISGKPPATIEWE.

The Glutamine amidotransferase type-1 domain occupies 9-204 (KILILDFGAQ…VVDICGCQTL (196 aa)). The Nucleophile role is filled by C86. Catalysis depends on residues H178 and E180. A GMPS ATP-PPase domain is found at 205–397 (WTSANIIEDQ…LGLPHAMVYR (193 aa)). 232–238 (SGGVDSS) contributes to the ATP binding site.

As to quaternary structure, homodimer.

It carries out the reaction XMP + L-glutamine + ATP + H2O = GMP + L-glutamate + AMP + diphosphate + 2 H(+). The protein operates within purine metabolism; GMP biosynthesis; GMP from XMP (L-Gln route): step 1/1. In terms of biological role, catalyzes the synthesis of GMP from XMP. The polypeptide is GMP synthase [glutamine-hydrolyzing] (Xylella fastidiosa (strain M23)).